The chain runs to 560 residues: Arginine--tRNA ligase (560 aa).

Residues 164-174 (FYYNDAGNQID) carry the 'HIGH' region motif.

The protein belongs to the class-I aminoacyl-tRNA synthetase family. As to quaternary structure, monomer.

The protein resides in the cytoplasm. The catalysed reaction is tRNA(Arg) + L-arginine + ATP = L-arginyl-tRNA(Arg) + AMP + diphosphate. In Bordetella pertussis (strain Tohama I / ATCC BAA-589 / NCTC 13251), this protein is Arginine--tRNA ligase.